An 80-amino-acid polypeptide reads, in one-letter code: Beta-toxin KAaH1 (80 aa).

The first 22 residues, 1–22, serve as a signal peptide directing secretion; the sequence is MMKLMLFSIIVILFSLIGSIHG. The LCN-type CS-alpha/beta domain maps to 25 to 80; that stretch reads VPGNYPLDSSDDTYLCAPLGENPFCIKICRKHGVKYGYCYAFQCWCEYLEDKNVKI. Cystine bridges form between Cys-40-Cys-63, Cys-49-Cys-68, and Cys-53-Cys-70.

The protein belongs to the long (3 C-C) scorpion toxin superfamily. Sodium/Potassium channel inhibitor family. In terms of tissue distribution, expressed by the venom gland.

It localises to the secreted. Functionally, inhibits the vertebrate potassium channels Kv1.1/KCNA1 and Kv1.3/KCNA3 in vitro with an IC(50) of 5.3 nM and 50.0 nM respectively. This chain is Beta-toxin KAaH1, found in Androctonus australis (Sahara scorpion).